We begin with the raw amino-acid sequence, 179 residues long: MASSDTAEATRRDFLYVATAAVGAAGVAAVAWPFITQMNPDAATIAAGAPIDIDISPVTEGQIVRVFWRGKPIFIRHRTAKEIQSEEAADVGALIDPQPDSARVKPGKAEWLVVYASCTHLGCIPLGHQGDWGGWFCPCHGSQYDASGRVRKGPAPTNLPVPPYEFVDNTKIRIGAGVA.

Residues 14–35 (FLYVATAAVGAAGVAAVAWPFI) form a helical membrane-spanning segment. In terms of domain architecture, Rieske spans 80-173 (AKEIQSEEAA…YEFVDNTKIR (94 aa)). [2Fe-2S] cluster is bound by residues Cys118, His120, Cys137, and His140. An intrachain disulfide couples Cys123 to Cys139.

The protein belongs to the Rieske iron-sulfur protein family. As to quaternary structure, the main subunits of complex b-c1 are: cytochrome b, cytochrome c1 and the Rieske protein. [2Fe-2S] cluster serves as cofactor.

The protein resides in the cell membrane. The enzyme catalyses a quinol + 2 Fe(III)-[cytochrome c](out) = a quinone + 2 Fe(II)-[cytochrome c](out) + 2 H(+)(out). Component of the ubiquinol-cytochrome c reductase complex (complex III or cytochrome b-c1 complex), which is a respiratory chain that generates an electrochemical potential coupled to ATP synthesis. The protein is Ubiquinol-cytochrome c reductase iron-sulfur subunit (petA) of Blastochloris viridis (Rhodopseudomonas viridis).